Consider the following 1734-residue polypeptide: Gag-Pol polyprotein (1734 aa).

Residue glycine 2 is the site of N-myristoyl glycine; by host attachment. Residues 109–112 (PTAP) carry the PTAP/PSAP motif motif. A disordered region spans residues 112-217 (PILPSGPSTQ…STTSRAFPLR (106 aa)). An LYPX(n)L motif motif is present at residues 128-132 (LYPAL). Residues 161-164 (PPPY) carry the PPXY motif motif. Serine 191 bears the Phosphoserine; by host mark. The tract at residues 344–392 (GRSPTNLAKVKGITQGPNESPSAFLERLKEAYRRYTPYDPEDHGQETSV) is interaction with host PIAS4. The tract at residues 429-434 (IFNKRE) is interaction with host UBE2I. Basic and acidic residues-rich tracts occupy residues 433–474 (RETP…REMS) and 485–498 (RQDR…RPQL). 2 disordered regions span residues 433-498 (RETP…RPQL) and 512-551 (WAKD…EPRI). The stretch at 437–477 (EEREERFRRETEENEERRRAEDEQREKERDRRRQREMSKLL) forms a coiled coil. Residues 501 to 518 (DQCAYCKEKGHWAKDCPK) form a CCHC-type zinc finger. In terms of domain architecture, Peptidase A2 spans 560-630 (VTFLVDTGAQ…CPYPLLGRDL (71 aa)). Aspartate 565 acts as the Protease; shared with dimeric partner in catalysis. The region spanning 740–931 (LDQGILVPCQ…KQVKYLGYLL (192 aa)) is the Reverse transcriptase domain. The Mg(2+) site is built by aspartate 808, aspartate 882, aspartate 883, aspartate 1182, glutamate 1220, aspartate 1241, and aspartate 1311. One can recognise an RNase H type-1 domain in the interval 1173–1319 (PDADHTWYTD…ADQAAREAAI (147 aa)). The HHCC-type zinc finger occupies 1386–1426 (HRLTHLGYQKMKALLDRGESPYYMLNRDKTLQYVADSCTVC). The Integrase catalytic domain maps to 1443–1601 (RGHRPGTHWE…TPYEILYGAP (159 aa)). Mg(2+)-binding residues include aspartate 1454 and aspartate 1513.

Belongs to the retroviral Pol polyprotein family. In terms of assembly, homohexamer; further associates as homomultimer. The virus core is composed of a lattice formed from hexagonal rings, each containing six capsid monomers. Interacts with mouse UBE2I and mouse PIAS4. Interacts (via PPXY motif) with host NEDD4. Interacts (via PSAP motif) with host TSG101. Interacts (via LYPX(n)L motif) with host PDCD6IP. As to quaternary structure, the reverse transcriptase is a monomer (Potential). Interacts (via RNase domains) with host release factor ETF1; this interaction is essential for translational readthrough of amber codon between viral gag and pol genes, as well as for viral replication. In terms of assembly, homodimer. It depends on Mg(2+) as a cofactor. Post-translationally, ubiquitinated by ITCH. Gag can recruit the ubiquitin ligase Itch in an L domain-independent manner to facilitate virus release via a mechanism that involves Gag ubiquitination. Specific enzymatic cleavages by the viral protease yield mature proteins. The protease is released by autocatalytic cleavage. The polyprotein is cleaved during and after budding, this process is termed maturation. In terms of processing, sumoylated; which is required for virus replication. Post-translationally, phosphorylated on serine residues.

It is found in the virion. The protein resides in the host cell membrane. Its subcellular location is the host late endosome membrane. It localises to the host endosome. The protein localises to the host multivesicular body. It is found in the host cytoplasm. The catalysed reaction is DNA(n) + a 2'-deoxyribonucleoside 5'-triphosphate = DNA(n+1) + diphosphate. It carries out the reaction Endonucleolytic cleavage to 5'-phosphomonoester.. Its activity is regulated as follows. Most efficiently inhibited by Amprenavir, which is able to block Gag-Pol processing in infected cells. Functionally, plays a role in budding and is processed by the viral protease during virion maturation outside the cell. During budding, it recruits, in a PPXY-dependent or independent manner, Nedd4-like ubiquitin ligases that conjugate ubiquitin molecules to Gag-Pol, or to Gag-Pol binding host factors. Interaction with HECT ubiquitin ligases probably links the viral protein to the host ESCRT pathway and facilitates release. In terms of biological role, targets Gag and gag-pol polyproteins to the plasma membrane via a multipartite membrane binding signal, that includes its myristoylated N-terminus. Also mediates nuclear localization of the pre-integration complex. Constituent of the pre-integration complex (PIC) which tethers the latter to mitotic chromosomes. This allows the integration of the viral genome into the host DNA. Its function is as follows. Forms the spherical core of the virion that encapsulates the genomic RNA-nucleocapsid complex. Functionally, involved in the packaging and encapsidation of two copies of the genome. Binds with high affinity to conserved UCUG elements within the packaging signal, located near the 5'-end of the genome. This binding is dependent on genome dimerization. Acts as a nucleic acid chaperone which is involved in rearrangement of nucleic acid secondary structures during gRNA retrotranscription. In terms of biological role, the aspartyl protease mediates proteolytic cleavages of Gag and Gag-Pol polyproteins during or shortly after the release of the virion from the plasma membrane. Cleavages take place as an ordered, step-wise cascade to yield mature proteins. This process is called maturation. Displays maximal activity during the budding process just prior to particle release from the cell (Potential). Cleaves the translation initiation factor eIF4G leading to the inhibition of host cap-dependent translation. RT is a multifunctional enzyme that converts the viral dimeric RNA genome into dsDNA in the cytoplasm, shortly after virus entry into the cell. This enzyme displays a DNA polymerase activity that can copy either DNA or RNA templates, and a ribonuclease H (RNase H) activity that cleaves the RNA strand of RNA-DNA heteroduplexes in a partially processive 3' to 5' endonucleasic mode. Conversion of viral genomic RNA into dsDNA requires many steps. A tRNA binds to the primer-binding site (PBS) situated at the 5' end of the viral RNA. RT uses the 3' end of the tRNA primer to perform a short round of RNA-dependent minus-strand DNA synthesis. The reading proceeds through the U5 region and ends after the repeated (R) region which is present at both ends of viral RNA. The portion of the RNA-DNA heteroduplex is digested by the RNase H, resulting in a ssDNA product attached to the tRNA primer. This ssDNA/tRNA hybridizes with the identical R region situated at the 3' end of viral RNA. This template exchange, known as minus-strand DNA strong stop transfer, can be either intra- or intermolecular. RT uses the 3' end of this newly synthesized short ssDNA to perform the RNA-dependent minus-strand DNA synthesis of the whole template. RNase H digests the RNA template except for a polypurine tract (PPT) situated at the 5' end of the genome. It is not clear if both polymerase and RNase H activities are simultaneous. RNase H probably can proceed both in a polymerase-dependent (RNA cut into small fragments by the same RT performing DNA synthesis) and a polymerase-independent mode (cleavage of remaining RNA fragments by free RTs). Secondly, RT performs DNA-directed plus-strand DNA synthesis using the PPT that has not been removed by RNase H as primers. PPT and tRNA primers are then removed by RNase H. The 3' and 5' ssDNA PBS regions hybridize to form a circular dsDNA intermediate. Strand displacement synthesis by RT to the PBS and PPT ends produces a blunt ended, linear dsDNA copy of the viral genome that includes long terminal repeats (LTRs) at both ends. Its function is as follows. Catalyzes viral DNA integration into the host chromosome, by performing a series of DNA cutting and joining reactions. This enzyme activity takes place after virion entry into a cell and reverse transcription of the RNA genome in dsDNA. The first step in the integration process is 3' processing. This step requires a complex comprising the viral genome, matrix protein and integrase. This complex is called the pre-integration complex (PIC). The integrase protein removes 2 nucleotides from each 3' end of the viral DNA, leaving recessed CA OH's at the 3' ends. In the second step that requires cell division, the PIC enters cell nucleus. In the third step, termed strand transfer, the integrase protein joins the previously processed 3' ends to the 5' ends of strands of target cellular DNA at the site of integration. The last step is viral DNA integration into host chromosome. This chain is Gag-Pol polyprotein (pol), found in Mus musculus (Mouse).